A 517-amino-acid chain; its full sequence is Crotonobetaine/carnitine--CoA ligase (517 aa).

It belongs to the ATP-dependent AMP-binding enzyme family.

It catalyses the reaction 4-(trimethylamino)butanoate + ATP + CoA = 4-(trimethylamino)butanoyl-CoA + AMP + diphosphate. The enzyme catalyses crotonobetaine + ATP + CoA = crotonobetainyl-CoA + AMP + diphosphate. It carries out the reaction (R)-carnitine + ATP + CoA = (R)-carnitinyl-CoA + AMP + diphosphate. It participates in amine and polyamine metabolism; carnitine metabolism. Functionally, catalyzes the transfer of CoA to carnitine, generating the initial carnitinyl-CoA needed for the CaiB reaction cycle. Also has activity toward crotonobetaine and gamma-butyrobetaine. The sequence is that of Crotonobetaine/carnitine--CoA ligase from Shigella dysenteriae serotype 1 (strain Sd197).